We begin with the raw amino-acid sequence, 720 residues long: Replication restart protein PriA (720 aa).

The 167-residue stretch at 200–366 (ILMKNCFTSW…LHKKCFYIKF (167 aa)) folds into the Helicase ATP-binding domain. Position 213–220 (213–220 (KNNFYLKV)) interacts with ATP. Residues 309 to 312 (NQEH) carry the DEAH box motif. Zn(2+)-binding residues include cysteine 425, cysteine 428, cysteine 434, cysteine 437, cysteine 452, cysteine 455, cysteine 465, and cysteine 468.

This sequence belongs to the helicase family. PriA subfamily. Component of the replication restart primosome. Requires Zn(2+) as cofactor.

It catalyses the reaction Couples ATP hydrolysis with the unwinding of duplex DNA by translocating in the 3'-5' direction.. The enzyme catalyses ATP + H2O = ADP + phosphate + H(+). Functionally, initiates the restart of stalled replication forks, which reloads the replicative helicase on sites other than the origin of replication. Recognizes and binds to abandoned replication forks and remodels them to uncover a helicase loading site. Promotes assembly of the primosome at these replication forks. The sequence is that of Replication restart protein PriA from Buchnera aphidicola subsp. Schizaphis graminum (strain Sg).